The following is a 290-amino-acid chain: Porphobilinogen deaminase (290 aa).

The residue at position 237 (Cys237) is an S-(dipyrrolylmethanemethyl)cysteine.

Belongs to the HMBS family. In terms of assembly, monomer. Dipyrromethane serves as cofactor.

The enzyme catalyses 4 porphobilinogen + H2O = hydroxymethylbilane + 4 NH4(+). The protein operates within porphyrin-containing compound metabolism; protoporphyrin-IX biosynthesis; coproporphyrinogen-III from 5-aminolevulinate: step 2/4. In terms of biological role, tetrapolymerization of the monopyrrole PBG into the hydroxymethylbilane pre-uroporphyrinogen in several discrete steps. The sequence is that of Porphobilinogen deaminase from Clostridium botulinum (strain 657 / Type Ba4).